Reading from the N-terminus, the 310-residue chain is Homoserine kinase (310 aa).

91–101 (PIGSGLGSSAC) is an ATP binding site.

It belongs to the GHMP kinase family. Homoserine kinase subfamily.

Its subcellular location is the cytoplasm. It carries out the reaction L-homoserine + ATP = O-phospho-L-homoserine + ADP + H(+). It participates in amino-acid biosynthesis; L-threonine biosynthesis; L-threonine from L-aspartate: step 4/5. Catalyzes the ATP-dependent phosphorylation of L-homoserine to L-homoserine phosphate. This chain is Homoserine kinase, found in Escherichia coli O17:K52:H18 (strain UMN026 / ExPEC).